The chain runs to 324 residues: RVTEQMKNEADTEYYGVISIGTPPESFKVIFDTGSSNLWVSSSHCSAQACSNHNKFKPRQSSTYVETGKTVDLTYGTGGMRGILGQDTVSVGGGSDPNQELGESQTEPGPFQAAAPFDGILGLAYPSIAAAGAVPVFDNMGSQSLVEKDLFSFYLSGGGANGSEVMLGGVDNSHYTGSIHWIPVTAEKYWQVALDGITVNGQTAACEGCQAIVDTGTSKIVAPVSALANIMKDIGASENQGEMMGNCASVQSLPDITFTINGVKQPLPPSAYIEGDQAFCTSGLGSSGVPSNTSELWIFGDVFLRNYYTIYDRTNNKVGFAPAA.

A Peptidase A1 domain is found at 14–321 (YYGVISIGTP…DRTNNKVGFA (308 aa)). D32 is an active-site residue. A disulfide bridge links C45 with C50. The segment at 86–109 (QDTVSVGGGSDPNQELGESQTEPG) is disordered. Over residues 96–107 (DPNQELGESQTE) the composition is skewed to polar residues. Residues C206 and C209 are joined by a disulfide bond. Residue D214 is part of the active site. Residues C247 and C280 are joined by a disulfide bond.

It belongs to the peptidase A1 family.

The polypeptide is Pepsin-2B (Gadus morhua (Atlantic cod)).